Consider the following 480-residue polypeptide: MAIDYAQISCNLASIIEEDSVFLFLIDKLNNLDISRRKISFNFIRLCYTYYILIKFNSRFKDTFLARSFIDYMHQNISDFIDENVELSDLYSNIYVRLQDASPKVVKNLFKILERETRGQSTNPLWHAMRKNCITATKIYDIYISKSFSGIQEHSYLGDAVLYGIKHERIIEHLLKTFFVKKPWISKTLGLLLDPSSGVFGASIDSYYGISFNDNNLIEVGDKVVIFELKFRYKYLREKNDLFVSELLQNPSEIALAKFILSHPIPAIEYRENGKMPSAREYLITNNPLYDSGKKRRACLTPKNLTFDITRLIPMNEKNVSTAIIFDVVKDCILNTLVAYQKAIFTIDAFINPRHRYYFQSILQQYVMTQFYIQDHDNPENIEKENLPSVYIVSAIFRKREDDEKNCRLLIEDTEYLEEEIPLILLITPITIDAEFTSRVIKDICCIWENKIAQQTNLKIWAQSAVRQYMAASSARPKTP.

This sequence belongs to the herpesviridae alkaline nuclease family. Interacts with major DNA-binding protein; this interaction increases the nuclease processivity of the alkaline exonuclease.

The protein localises to the host nucleus. It localises to the host cytoplasm. In terms of biological role, plays a role in processing non linear or branched viral DNA intermediates in order to promote the production of mature packaged unit-length linear progeny viral DNA molecules. Exhibits endonuclease and exonuclease activities and accepts both double-stranded and single-stranded DNA as substrate. Exonuclease digestion of DNA is in the 5'-&gt; 3' direction and the products are 5'-monophosphate nucleosides. Additionally, forms a recombinase with the major DNA-binding protein, which displays strand exchange activity. In Homo sapiens (Human), this protein is Alkaline nuclease (U70).